A 262-amino-acid chain; its full sequence is Serine/arginine-rich splicing factor 10 (262 aa).

The RRM domain occupies threonine 10–glycine 88. A phosphoserine mark is found at serine 23, serine 106, and serine 108. The segment covering tyrosine 116–arginine 126 has biased composition (basic and acidic residues). Positions tyrosine 116–histidine 262 are disordered. 3 positions are modified to phosphoserine: serine 129, serine 131, and serine 133. Positions phenylalanine 134–threonine 150 are enriched in low complexity. Serine 158, serine 160, and arginine 168 each carry phosphoserine. Composition is skewed to basic residues over residues phenylalanine 165–glutamine 186 and lysine 194–glycine 207. The span at serine 209–arginine 234 shows a compositional bias: basic and acidic residues. A compositionally biased stretch (low complexity) spans arginine 252–histidine 262.

The protein belongs to the splicing factor SR family. As to quaternary structure, the phosphorylated but not the dephosphorylated form interacts with TRA2B/SFRS10. The dephosphorylated form interacts with SNRNP70. Isoform 1 interacts with FUS C-terminus. Isoform 3 interacts with FUS C-terminus. Interacts with YTHDC1, leading to inhibit RNA-binding activity of SRSF10. Phosphorylated. Fully dephosphorylated in mitosis and partially dephosphorylated on heat shock. In terms of tissue distribution, widely expressed.

The protein localises to the nucleus speckle. It is found in the cytoplasm. In terms of biological role, splicing factor that in its dephosphorylated form acts as a general repressor of pre-mRNA splicing. Seems to interfere with the U1 snRNP 5'-splice recognition of SNRNP70. Required for splicing repression in M-phase cells and after heat shock. Also acts as a splicing factor that specifically promotes exon skipping during alternative splicing. Interaction with YTHDC1, a RNA-binding protein that recognizes and binds N6-methyladenosine (m6A)-containing RNAs, prevents SRSF10 from binding to its mRNA-binding sites close to m6A-containing regions, leading to inhibit exon skipping during alternative splicing. May be involved in regulation of alternative splicing in neurons, with isoform 1 acting as a positive and isoform 3 as a negative regulator. The sequence is that of Serine/arginine-rich splicing factor 10 (SRSF10) from Homo sapiens (Human).